The following is a 238-amino-acid chain: Lactate utilization protein A (238 aa).

It belongs to the LutA/YkgE family.

In terms of biological role, is involved in L-lactate degradation and allows cells to grow with lactate as the sole carbon source. This Bacillus licheniformis (strain ATCC 14580 / DSM 13 / JCM 2505 / CCUG 7422 / NBRC 12200 / NCIMB 9375 / NCTC 10341 / NRRL NRS-1264 / Gibson 46) protein is Lactate utilization protein A.